The primary structure comprises 136 residues: Transcription antitermination protein NusB (136 aa).

It belongs to the NusB family.

In terms of biological role, involved in transcription antitermination. Required for transcription of ribosomal RNA (rRNA) genes. Binds specifically to the boxA antiterminator sequence of the ribosomal RNA (rrn) operons. This Kineococcus radiotolerans (strain ATCC BAA-149 / DSM 14245 / SRS30216) protein is Transcription antitermination protein NusB.